A 400-amino-acid chain; its full sequence is Nicotinate phosphoribosyltransferase (400 aa).

Position 220 is a phosphohistidine; by autocatalysis (His220).

It belongs to the NAPRTase family. Post-translationally, transiently phosphorylated on a His residue during the reaction cycle. Phosphorylation strongly increases the affinity for substrates and increases the rate of nicotinate D-ribonucleotide production. Dephosphorylation regenerates the low-affinity form of the enzyme, leading to product release.

The enzyme catalyses nicotinate + 5-phospho-alpha-D-ribose 1-diphosphate + ATP + H2O = nicotinate beta-D-ribonucleotide + ADP + phosphate + diphosphate. It participates in cofactor biosynthesis; NAD(+) biosynthesis; nicotinate D-ribonucleotide from nicotinate: step 1/1. In terms of biological role, catalyzes the synthesis of beta-nicotinate D-ribonucleotide from nicotinate and 5-phospho-D-ribose 1-phosphate at the expense of ATP. The sequence is that of Nicotinate phosphoribosyltransferase from Cronobacter sakazakii (strain ATCC BAA-894) (Enterobacter sakazakii).